The primary structure comprises 95 residues: Protein K6 (95 aa).

The signal sequence occupies residues 1-24 (MAPVHVLCCVSVLLATFYLTPTES).

The polypeptide is Protein K6 (K6) (Human herpesvirus 8 type P (isolate GK18) (HHV-8)).